We begin with the raw amino-acid sequence, 445 residues long: MFRVAIVGIPNVGKSSLFNRIIGQRKAIVEDIPGVTRDRIVSTAEWRGVKFEVVDTGGYITGDEDKFAPYIRKQVEKELELSDLFIFVVDGKQGLTPLDKEIANILHRTEKPVIVAVNKIDDPEKEKLAYEFYELGFENIIPISAIQKLGLAELLDKVVEYIPEYEKEIQEEEEKEEKRDYIKVAIVGKPNAGKSSLINALLNEERVLVSEIPGTTRDTVDILYEKDGQKFLFLDTAGMRKKSKVDFGLEFFSVGRTIEAIEKADVVVLVIDANQGATEQDTKIAGLIQRRYKPAVIVINKIDTVDKKTLEKVEKQVRERLYFISYAPIVFTSAKTKEGLDELLEKIVYVYNQAWKRVGTGQLNRAIKQIQNLRQPPTYQGKPLKIYYATQLEGKPPAFLLFVNKAEGFKENYVKFLENNLRKLLGLENAPIKLIFRGKEEEKDK.

EngA-type G domains follow at residues 2–166 (FRVA…PEYE) and 182–355 (IKVA…NQAW). GTP is bound by residues 8-15 (GIPNVGKS), 55-59 (DTGGY), 118-121 (NKID), 188-195 (GKPNAGKS), 235-239 (DTAGM), and 300-303 (NKID). Residues 356 to 440 (KRVGTGQLNR…PIKLIFRGKE (85 aa)) enclose the KH-like domain.

This sequence belongs to the TRAFAC class TrmE-Era-EngA-EngB-Septin-like GTPase superfamily. EngA (Der) GTPase family. In terms of assembly, associates with the 50S ribosomal subunit.

Functionally, GTPase that plays an essential role in the late steps of ribosome biogenesis. This Sulfurihydrogenibium sp. (strain YO3AOP1) protein is GTPase Der.